The following is a 184-amino-acid chain: Probable archaeosortase E (184 aa).

A run of 4 helical transmembrane segments spans residues 27–47 (ILFLIKFYIIFLVVFFILSYF), 86–106 (VVEECTGSFLIAGLLALIIVY), 114–134 (IIGIFFVLLAFFVNIFRIVLI), and 151–171 (IAGYGVILTLVPVLVIGYLKI). Cys90 serves as the catalytic Acyl-thioester intermediate. Residue Arg130 is the Proton donor of the active site.

It belongs to the exosortase/archaeosortase family. Archaeosortase E subfamily.

The protein localises to the cell membrane. Its function is as follows. Transpeptidase that recognizes and modifies its substrate by proteolytic cleavage of a sorting signal. Following cleavage, a covalent intermediate is formed via a thioester bond between the archaeosortase and its substrate, which is then transferred and covalently attached to the cell membrane. The protein is Probable archaeosortase E of Methanocaldococcus jannaschii (strain ATCC 43067 / DSM 2661 / JAL-1 / JCM 10045 / NBRC 100440) (Methanococcus jannaschii).